Consider the following 784-residue polypeptide: DNA ligase (784 aa).

NAD(+) is bound by residues 35–39 (DAEYD), 84–85 (SL), and glutamate 117. Lysine 119 acts as the N6-AMP-lysine intermediate in catalysis. NAD(+) is bound by residues arginine 140, glutamate 177, lysine 294, and lysine 318. Residues cysteine 412, cysteine 415, cysteine 442, and cysteine 448 each contribute to the Zn(2+) site. Residues 703–784 (AEGLPLAGQT…FLALLRQLES (82 aa)) enclose the BRCT domain.

This sequence belongs to the NAD-dependent DNA ligase family. LigA subfamily. Mg(2+) is required as a cofactor. Requires Mn(2+) as cofactor.

It carries out the reaction NAD(+) + (deoxyribonucleotide)n-3'-hydroxyl + 5'-phospho-(deoxyribonucleotide)m = (deoxyribonucleotide)n+m + AMP + beta-nicotinamide D-nucleotide.. In terms of biological role, DNA ligase that catalyzes the formation of phosphodiester linkages between 5'-phosphoryl and 3'-hydroxyl groups in double-stranded DNA using NAD as a coenzyme and as the energy source for the reaction. It is essential for DNA replication and repair of damaged DNA. This Azotobacter vinelandii (strain DJ / ATCC BAA-1303) protein is DNA ligase.